The primary structure comprises 334 residues: Holliday junction branch migration complex subunit RuvB (334 aa).

The tract at residues 1–182 (MNERMVDQSM…FGVHLRLEYY (182 aa)) is large ATPase domain (RuvB-L). Residues Leu-21, Arg-22, Gly-63, Lys-66, Thr-67, Thr-68, 129–131 (EDF), Arg-172, Tyr-182, and Arg-219 contribute to the ATP site. Mg(2+) is bound at residue Thr-67. A small ATPAse domain (RuvB-S) region spans residues 183–253 (NESDLKEIII…TTKHALGLLQ (71 aa)). The segment at 256–334 (QHGLDYIDHK…HFAKSNEERG (79 aa)) is head domain (RuvB-H). DNA-binding residues include Arg-292, Arg-311, and Arg-316.

Belongs to the RuvB family. As to quaternary structure, homohexamer. Forms an RuvA(8)-RuvB(12)-Holliday junction (HJ) complex. HJ DNA is sandwiched between 2 RuvA tetramers; dsDNA enters through RuvA and exits via RuvB. An RuvB hexamer assembles on each DNA strand where it exits the tetramer. Each RuvB hexamer is contacted by two RuvA subunits (via domain III) on 2 adjacent RuvB subunits; this complex drives branch migration. In the full resolvosome a probable DNA-RuvA(4)-RuvB(12)-RuvC(2) complex forms which resolves the HJ.

The protein localises to the cytoplasm. The enzyme catalyses ATP + H2O = ADP + phosphate + H(+). The RuvA-RuvB-RuvC complex processes Holliday junction (HJ) DNA during genetic recombination and DNA repair, while the RuvA-RuvB complex plays an important role in the rescue of blocked DNA replication forks via replication fork reversal (RFR). RuvA specifically binds to HJ cruciform DNA, conferring on it an open structure. The RuvB hexamer acts as an ATP-dependent pump, pulling dsDNA into and through the RuvAB complex. RuvB forms 2 homohexamers on either side of HJ DNA bound by 1 or 2 RuvA tetramers; 4 subunits per hexamer contact DNA at a time. Coordinated motions by a converter formed by DNA-disengaged RuvB subunits stimulates ATP hydrolysis and nucleotide exchange. Immobilization of the converter enables RuvB to convert the ATP-contained energy into a lever motion, pulling 2 nucleotides of DNA out of the RuvA tetramer per ATP hydrolyzed, thus driving DNA branch migration. The RuvB motors rotate together with the DNA substrate, which together with the progressing nucleotide cycle form the mechanistic basis for DNA recombination by continuous HJ branch migration. Branch migration allows RuvC to scan DNA until it finds its consensus sequence, where it cleaves and resolves cruciform DNA. This Staphylococcus aureus (strain N315) protein is Holliday junction branch migration complex subunit RuvB.